We begin with the raw amino-acid sequence, 742 residues long: Photosystem I P700 chlorophyll a apoprotein A2 (742 aa).

Transmembrane regions (helical) follow at residues 46 to 69 (LFST…FHIA), 135 to 158 (LFQG…LHLQ), 175 to 199 (LNHH…HVAI), 273 to 291 (IAHH…GHMY), 336 to 359 (LHFQ…QHMG), 375 to 401 (SALY…IFFV), 423 to 445 (ALIS…IYVH), and 525 to 543 (FLVH…LILI). [4Fe-4S] cluster contacts are provided by Cys-567 and Cys-576. The next 2 helical transmembrane spans lie at 583 to 604 (ATYL…YWHW) and 651 to 673 (LSPW…MFLI). Divinyl chlorophyll a is bound by residues His-662, Met-670, and Tyr-678. Position 679 (Trp-679) interacts with phylloquinone. A helical membrane pass occupies residues 715–735 (LVGLTHFTVGNFVTFGAFVIA).

Belongs to the PsaA/PsaB family. In terms of assembly, the PsaA/B heterodimer binds the P700 divinyl chlorophyll special pair and subsequent electron acceptors. PSI consists of a core antenna complex that captures photons, and an electron transfer chain that converts photonic excitation into a charge separation. The cyanobacterial PSI reaction center is composed of one copy each of PsaA,B,C,D,E,F,I,J,K,L,M and X, and forms trimeric complexes. PSI electron transfer chain: 5 divinyl chlorophyll a, 1 divinyl chlorophyll a', 2 phylloquinones and 3 4Fe-4S clusters. PSI core antenna: 90 divinyl chlorophyll a, 22 carotenoids, 3 phospholipids and 1 galactolipid. P700 is a divinyl chlorophyll a/divinyl chlorophyll a' dimer, A0 is one or more divinyl chlorophyll a, A1 is one or both phylloquinones and FX is a shared 4Fe-4S iron-sulfur center. serves as cofactor.

It is found in the cellular thylakoid membrane. It carries out the reaction reduced [plastocyanin] + hnu + oxidized [2Fe-2S]-[ferredoxin] = oxidized [plastocyanin] + reduced [2Fe-2S]-[ferredoxin]. PsaA and PsaB bind P700, the primary electron donor of photosystem I (PSI), as well as the electron acceptors A0, A1 and FX. PSI is a plastocyanin/cytochrome c6-ferredoxin oxidoreductase, converting photonic excitation into a charge separation, which transfers an electron from the donor P700 chlorophyll pair to the spectroscopically characterized acceptors A0, A1, FX, FA and FB in turn. Oxidized P700 is reduced on the lumenal side of the thylakoid membrane by plastocyanin or cytochrome c6. The chain is Photosystem I P700 chlorophyll a apoprotein A2 from Prochlorococcus marinus (strain NATL2A).